The chain runs to 231 residues: Large ribosomal subunit protein uL1 (231 aa).

The protein belongs to the universal ribosomal protein uL1 family. In terms of assembly, part of the 50S ribosomal subunit.

Binds directly to 23S rRNA. The L1 stalk is quite mobile in the ribosome, and is involved in E site tRNA release. In terms of biological role, protein L1 is also a translational repressor protein, it controls the translation of the L11 operon by binding to its mRNA. The protein is Large ribosomal subunit protein uL1 of Francisella philomiragia subsp. philomiragia (strain ATCC 25017 / CCUG 19701 / FSC 153 / O#319-036).